Consider the following 430-residue polypeptide: Pyrokinin-1 receptor (430 aa).

Over 1 to 16 (MSAGNMSHDLGPPRDP) the chain is Extracellular. N5 carries an N-linked (GlcNAc...) asparagine glycan. Residues 17 to 37 (LAIVIPVTVVYSLIFITGVVG) form a helical membrane-spanning segment. Over 38-53 (NISTCIVIKKNRSMHT) the chain is Cytoplasmic. A helical membrane pass occupies residues 54 to 74 (ATNYYLFSLAISDFLLLLSGV). At 75–96 (PQEVSYIWSKYPYVFGEYICIG) the chain is on the extracellular side. Residues C94 and C171 are joined by a disulfide bond. A helical membrane pass occupies residues 97–117 (RGLLAETSANATVLTITAFTV). The Cytoplasmic portion of the chain corresponds to 118–140 (ERYIAICHPFLGQAMSKLSRAIR). The chain crosses the membrane as a helical span at residues 141 to 161 (IIVLVWIMAIVTAIPQAAQFG). Residues 162–185 (IEHYSGVEQCGIVRVIVKHSFQLS) are Extracellular-facing. A helical membrane pass occupies residues 186–206 (TFIFFLAPMSIILVLYLLIGV). Residues 207-281 (HLYRSTLVEG…GRLNHYGTRR (75 aa)) are Cytoplasmic-facing. Residues 282 to 302 (VLRMLVAVVVCFFLCWAPFHA) form a helical membrane-spanning segment. Residues 303-321 (QRLIAIYAPARGAKLRDQH) lie on the Extracellular side of the membrane. The helical transmembrane segment at 322–342 (EFVYTVMTYVSGVLYYLSTCI) threads the bilayer. Topologically, residues 343-430 (NPLLYNIMSH…QYAMIGVQVN (88 aa)) are cytoplasmic. A compositionally biased stretch (polar residues) spans 388 to 397 (TNSSQTQRFS). The segment at 388–413 (TNSSQTQRFSIESAEQPKPSIMQNPT) is disordered.

It belongs to the G-protein coupled receptor 1 family.

It localises to the cell membrane. In terms of biological role, receptor for the neuropeptide CAP-3/pyrokinin-1 (TGPSASSGLWFGPRL-amide). Also activated weakly by other neuropeptides terminating in the sequence PRL-amide including pyrokinin-2, Hug-gamma, and ecdysis-triggering-hormone-1. The activity of this receptor is mediated by G proteins which activate a phosphatidyl-inositol-calcium second messenger system. In Drosophila melanogaster (Fruit fly), this protein is Pyrokinin-1 receptor.